The following is a 2073-amino-acid chain: Non-reducing polyketide synthase cla3 (2073 aa).

The N-terminal acylcarrier protein transacylase domain (SAT) stretch occupies residues 9–242; it reads LLFGDYTEPW…EKLNIHALQH (234 aa). Residues 363–793 form the Ketosynthase family 3 (KS3) domain; that stretch reads SGRIAIVGMS…GGNGCLLLEE (431 aa). Catalysis depends on for beta-ketoacyl synthase activity residues Cys538, His673, and His712. The segment at 898-1198 is malonyl-CoA:ACP transacylase (MAT) domain; the sequence is TFTGQGSQYA…KIMSTLDATG (301 aa). The active-site For acyl/malonyl transferase activity is Ser987. The tract at residues 1276–1590 is product template (PT) domain; it reads STCAQYVITE…QNVILERLLG (315 aa). Residues 1279-1420 form an N-terminal hotdog fold region; the sequence is AQYVITETKT…AGLESQWEKS (142 aa). The region spanning 1279–1586 is the PKS/mFAS DH domain; it reads AQYVITETKT…FHRVQNVILE (308 aa). His1311 (proton acceptor; for dehydratase activity) is an active-site residue. Residues 1439-1586 are C-terminal hotdog fold; the sequence is QGHRIQRDIY…FHRVQNVILE (148 aa). Asp1500 functions as the Proton donor; for dehydratase activity in the catalytic mechanism. The segment at 1594 to 1637 is disordered; that stretch reads SSSVPAQASDPLRSKRSPQEARSLPGEAKTEKPGSTIATTSPVL. The region spanning 1641–1718 is the Carrier domain; the sequence is KSEQGMFQAL…NLRCAFDEDV (78 aa). Ser1678 is subject to O-(pantetheine 4'-phosphoryl)serine. Residues 1721–1738 show a composition bias toward polar residues; it reads EFTDSEVTSGTPNSSESV. The tract at residues 1721-1786 is disordered; sequence EFTDSEVTSG…GVLDDGSPQP (66 aa). Residues 1747 to 1774 are compositionally biased toward basic and acidic residues; that stretch reads PEEHAFKEPKDDSPLARRDMDNSNDRSL. The interval 1805–1950 is thioesterase (TE) domain; it reads FLIADGSGSI…MQQHLRAIFK (146 aa). His2058 functions as the For thioesterase activity in the catalytic mechanism.

The protein operates within secondary metabolite biosynthesis. Its function is as follows. Highly reducing polyketide synthase; part of the gene cluster that mediates the biosynthesis of cladosporin, a tricyclic octaketide that acts as an antimalarial agent though inhibition of the Plasmodium falciparum lysyl-tRNA synthetase. The highly reducing polyketide synthase cla2 is responsible for biosynthesis up to the pentaketide stage, including of the tetrahydropyran (THP) ring, whereas the three subsequent ketide extensions with no reduction are catalyzed by the non-reducing polyketide synthase cla3. The sequence is that of Non-reducing polyketide synthase cla3 from Cladosporium cladosporioides.